Consider the following 360-residue polypeptide: Glutamate 5-kinase (360 aa).

Lysine 7 is an ATP binding site. 3 residues coordinate substrate: serine 47, aspartate 134, and asparagine 146. ATP contacts are provided by residues 166 to 167 and 210 to 216; these read TD and TGGISTK. A PUA domain is found at 275–356; sequence VGKITLDDGA…SSIIVVHRDV (82 aa).

Belongs to the glutamate 5-kinase family.

The protein resides in the cytoplasm. It carries out the reaction L-glutamate + ATP = L-glutamyl 5-phosphate + ADP. It functions in the pathway amino-acid biosynthesis; L-proline biosynthesis; L-glutamate 5-semialdehyde from L-glutamate: step 1/2. Its function is as follows. Catalyzes the transfer of a phosphate group to glutamate to form L-glutamate 5-phosphate. The polypeptide is Glutamate 5-kinase (Prochlorococcus marinus (strain AS9601)).